A 57-amino-acid chain; its full sequence is UPF0391 membrane protein BRADO2787 (57 aa).

2 helical membrane passes run Trp-6–Ser-26 and Ile-35–Phe-55.

It belongs to the UPF0391 family.

Its subcellular location is the cell membrane. The polypeptide is UPF0391 membrane protein BRADO2787 (Bradyrhizobium sp. (strain ORS 278)).